We begin with the raw amino-acid sequence, 402 residues long: Zinc finger protein CONSTANS-LIKE 14 (402 aa).

The Zn(2+) site is built by C12, C15, C35, H40, C55, C58, C78, and H83. The B box-type 1; atypical zinc finger occupies 12–54 (CEFCGERTAVLFCRADTAKLCLPCDQHVHSANLLSRKHVRSQI). The segment at 55 to 97 (CDNCSKEPVSVRCFTDNLVLCQECDWDVHGSCSSSATHERSAV) adopts a B box-type 2; atypical zinc-finger fold. The segment at 287 to 322 (SYQQEDSVHSTSTKGQETSKSNNIPAAIHSHKSSND) is disordered. Positions 295–310 (HSTSTKGQETSKSNNI) are enriched in polar residues. The stretch at 345–372 (VTNADLEQMAQNRDNAMQRYKEKKKTRR) forms a coiled coil. Positions 357–399 (RDNAMQRYKEKKKTRRYDKTIRYETRKARAETRLRVKGRFVKA) constitute a CCT domain.

Belongs to the CONSTANS family.

Its subcellular location is the nucleus. The protein is Zinc finger protein CONSTANS-LIKE 14 (COL14) of Arabidopsis thaliana (Mouse-ear cress).